The sequence spans 353 residues: sn-glycerol-3-phosphate import ATP-binding protein UgpC 3 (353 aa).

The 232-residue stretch at 4–235 folds into the ABC transporter domain; the sequence is IALKDVRKVY…PATTFVATFI (232 aa). 37–44 is a binding site for ATP; that stretch reads GPSGCGKS.

The protein belongs to the ABC transporter superfamily. sn-glycerol-3-phosphate importer (TC 3.A.1.1.3) family. The complex is composed of two ATP-binding proteins (UgpC), two transmembrane proteins (UgpA and UgpE) and a solute-binding protein (UgpB).

The protein resides in the cell inner membrane. The catalysed reaction is sn-glycerol 3-phosphate(out) + ATP + H2O = sn-glycerol 3-phosphate(in) + ADP + phosphate + H(+). Functionally, part of the ABC transporter complex UgpBAEC involved in sn-glycerol-3-phosphate (G3P) import. Responsible for energy coupling to the transport system. This is sn-glycerol-3-phosphate import ATP-binding protein UgpC 3 from Agrobacterium fabrum (strain C58 / ATCC 33970) (Agrobacterium tumefaciens (strain C58)).